The sequence spans 375 residues: S-adenosylmethionine:tRNA ribosyltransferase-isomerase (375 aa).

The protein belongs to the QueA family. In terms of assembly, monomer.

The protein resides in the cytoplasm. The enzyme catalyses 7-aminomethyl-7-carbaguanosine(34) in tRNA + S-adenosyl-L-methionine = epoxyqueuosine(34) in tRNA + adenine + L-methionine + 2 H(+). It functions in the pathway tRNA modification; tRNA-queuosine biosynthesis. Transfers and isomerizes the ribose moiety from AdoMet to the 7-aminomethyl group of 7-deazaguanine (preQ1-tRNA) to give epoxyqueuosine (oQ-tRNA). This is S-adenosylmethionine:tRNA ribosyltransferase-isomerase from Rickettsia typhi (strain ATCC VR-144 / Wilmington).